The primary structure comprises 110 residues: Phosphoribosyl-ATP pyrophosphatase (110 aa).

The protein belongs to the PRA-PH family.

The protein resides in the cytoplasm. The catalysed reaction is 1-(5-phospho-beta-D-ribosyl)-ATP + H2O = 1-(5-phospho-beta-D-ribosyl)-5'-AMP + diphosphate + H(+). The protein operates within amino-acid biosynthesis; L-histidine biosynthesis; L-histidine from 5-phospho-alpha-D-ribose 1-diphosphate: step 2/9. This Clostridium botulinum (strain ATCC 19397 / Type A) protein is Phosphoribosyl-ATP pyrophosphatase.